Consider the following 512-residue polypeptide: Maturase K (512 aa).

The protein belongs to the intron maturase 2 family. MatK subfamily.

The protein localises to the plastid. It localises to the chloroplast. Functionally, usually encoded in the trnK tRNA gene intron. Probably assists in splicing its own and other chloroplast group II introns. The polypeptide is Maturase K (Wolffiella gladiata (Florida mud-midget)).